The sequence spans 590 residues: Aspartate--tRNA(Asp/Asn) ligase (590 aa).

An L-aspartate-binding site is contributed by Glu-175. The aspartate stretch occupies residues 199–202 (QQYK). The L-aspartate site is built by Arg-221 and His-450. 221 to 223 (RDE) serves as a coordination point for ATP. Glu-484 contacts ATP. Arg-491 contacts L-aspartate. 536–539 (GVDR) is an ATP binding site.

It belongs to the class-II aminoacyl-tRNA synthetase family. Type 1 subfamily. Homodimer.

It localises to the cytoplasm. The catalysed reaction is tRNA(Asx) + L-aspartate + ATP = L-aspartyl-tRNA(Asx) + AMP + diphosphate. In terms of biological role, aspartyl-tRNA synthetase with relaxed tRNA specificity since it is able to aspartylate not only its cognate tRNA(Asp) but also tRNA(Asn). Reaction proceeds in two steps: L-aspartate is first activated by ATP to form Asp-AMP and then transferred to the acceptor end of tRNA(Asp/Asn). This chain is Aspartate--tRNA(Asp/Asn) ligase, found in Rhodopseudomonas palustris (strain HaA2).